We begin with the raw amino-acid sequence, 236 residues long: Concanavalin-Ma (236 aa).

Positions 8 and 10 each coordinate Mn(2+). Residues D10, Y12, N14, and D19 each contribute to the Ca(2+) site. Residue Y12 participates in a carbohydrate binding. Mn(2+) is bound by residues D19 and H24. 98–99 (LY) serves as a coordination point for a carbohydrate. Position 207 (D207) interacts with Ca(2+). R227 contributes to the a carbohydrate binding site.

It belongs to the leguminous lectin family. As to quaternary structure, homotetramer.

Its function is as follows. Glucose/D-mannose specific lectin. The sequence is that of Concanavalin-Ma from Canavalia rosea (Beach bean).